The chain runs to 142 residues: Large ribosomal subunit protein uL11 (142 aa).

It belongs to the universal ribosomal protein uL11 family. Part of the ribosomal stalk of the 50S ribosomal subunit. Interacts with L10 and the large rRNA to form the base of the stalk. L10 forms an elongated spine to which L12 dimers bind in a sequential fashion forming a multimeric L10(L12)X complex. One or more lysine residues are methylated.

Forms part of the ribosomal stalk which helps the ribosome interact with GTP-bound translation factors. The polypeptide is Large ribosomal subunit protein uL11 (Mycobacterium sp. (strain MCS)).